Here is a 384-residue protein sequence, read N- to C-terminus: Bacterial ceramide synthase (384 aa).

It localises to the cytoplasm. The catalysed reaction is 3-oxosphinganine + a fatty acyl-CoA = N-acyl-3-oxosphinganine + CoA + H(+). It catalyses the reaction 3-oxosphinganine + tetradecanoyl-CoA = N-tetradecanoyl-3-oxosphinganine + CoA + H(+). It carries out the reaction 3-oxosphinganine + hexadecanoyl-CoA = N-hexadecanoyl-3-oxosphinganine + CoA + H(+). The enzyme catalyses 3-oxosphinganine + (9Z)-hexadecenoyl-CoA = N-(9Z-hexadecenoyl)-3-oxosphinganine + CoA + H(+). The catalysed reaction is 3-oxosphinganine + octanoyl-CoA = N-octanoyl-3-oxosphinganine + CoA + H(+). It catalyses the reaction 3-oxosphinganine + decanoyl-CoA = N-decanoyl-3-oxosphinganine + CoA + H(+). It carries out the reaction 3-oxosphinganine + dodecanoyl-CoA = N-dodecanoyl-3-oxosphinganine + CoA + H(+). The enzyme catalyses 3-oxosphinganine + octadecanoyl-CoA = N-octadecanoyl-3-oxosphinganine + CoA + H(+). The catalysed reaction is 3-oxosphinganine + eicosanoyl-CoA = N-eicosanoyl-3-oxosphinganine + CoA + H(+). It catalyses the reaction 3-oxosphinganine + docosanoyl-CoA = N-docosanoyl-3-ketodihydrosphingosine + CoA + H(+). It carries out the reaction 3-oxosphinganine + tetracosanoyl-CoA = N-tetracosanoyl-3-oxosphinganine + CoA + H(+). Its pathway is lipid metabolism; sphingolipid metabolism. In terms of biological role, involved in de novo bacterial ceramide synthesis. Catalyzes the condensation of 3-oxosphinganine with an acyl-CoA to generate oxidized ceramides. Can use acyl-CoA substrates ranging from C8 to C24, with highest in vitro activity with C14 and very little activity with acyl-CoA thioesters of 18 carbons or longer. May have a preference for monounsaturated acyl-CoA substrates, as it has a threefold greater preference for C16:1-CoA over C16:0-CoA as a substrate in vitro. This Caulobacter vibrioides (strain NA1000 / CB15N) (Caulobacter crescentus) protein is Bacterial ceramide synthase.